The primary structure comprises 236 residues: MASLDRVKVLVLGDSGVGKSSLVHLLCQNQVLGNPSWTVGCSVDVRVHDYKEGTPEEKTYYIELWDVGGSVGSASSVKSTRAVFYNSVNGIIFVHDLTNKKSSQNLRRWSLEALNRDLVPTGVLVTNGDYDQEQFADNQIPLLVIGTKLDQIHETKRHEVLTRTAFLAEDFNPEEINLDCTNPRYLAAGSSNAVKLSRFFDKVIEKRYFLREGNQIPGFPDRKRFGAGTLKSLHYD.

A small GTPase-like region spans residues 1–236 (MASLDRVKVL…AGTLKSLHYD (236 aa)). GTP contacts are provided by residues 16–21 (GVGKSS), 148–150 (KLD), and 179–180 (DC).

Belongs to the small GTPase superfamily. Rab family. Homodimer. Interacts with GPR89; the interaction stabilizes GPR89. Interacts with RAP1GDS1.

Its function is as follows. Required for KRAS signaling regulation and modulation of cell proliferation. Regulator of KRAS prenylation, and probably prenylation of other small GTPases. Required for lymphocyte development and function. Not required for myeloid cell development. The polypeptide is Rab-like protein 3 (RABL3) (Homo sapiens (Human)).